Reading from the N-terminus, the 191-residue chain is Fe/S biogenesis protein NfuA (191 aa).

[4Fe-4S] cluster contacts are provided by C149 and C152.

It belongs to the NfuA family. As to quaternary structure, homodimer. It depends on [4Fe-4S] cluster as a cofactor.

In terms of biological role, involved in iron-sulfur cluster biogenesis. Binds a 4Fe-4S cluster, can transfer this cluster to apoproteins, and thereby intervenes in the maturation of Fe/S proteins. Could also act as a scaffold/chaperone for damaged Fe/S proteins. The sequence is that of Fe/S biogenesis protein NfuA from Pectobacterium carotovorum subsp. carotovorum (strain PC1).